The chain runs to 50 residues: Large ribosomal subunit protein bL32c (50 aa).

It belongs to the bacterial ribosomal protein bL32 family.

Its subcellular location is the plastid. The protein localises to the chloroplast. The sequence is that of Large ribosomal subunit protein bL32c from Lotus japonicus (Lotus corniculatus var. japonicus).